Reading from the N-terminus, the 567-residue chain is Dihydroxy-acid dehydratase (567 aa).

Residue cysteine 52 participates in [2Fe-2S] cluster binding. Aspartate 84 is a binding site for Mg(2+). Cysteine 125 serves as a coordination point for [2Fe-2S] cluster. Residues aspartate 126 and lysine 127 each coordinate Mg(2+). At lysine 127 the chain carries N6-carboxylysine. A [2Fe-2S] cluster-binding site is contributed by cysteine 197. Glutamate 448 provides a ligand contact to Mg(2+). Residue serine 474 is the Proton acceptor of the active site.

It belongs to the IlvD/Edd family. In terms of assembly, homodimer. The cofactor is [2Fe-2S] cluster. It depends on Mg(2+) as a cofactor.

It catalyses the reaction (2R)-2,3-dihydroxy-3-methylbutanoate = 3-methyl-2-oxobutanoate + H2O. It carries out the reaction (2R,3R)-2,3-dihydroxy-3-methylpentanoate = (S)-3-methyl-2-oxopentanoate + H2O. Its pathway is amino-acid biosynthesis; L-isoleucine biosynthesis; L-isoleucine from 2-oxobutanoate: step 3/4. It functions in the pathway amino-acid biosynthesis; L-valine biosynthesis; L-valine from pyruvate: step 3/4. In terms of biological role, functions in the biosynthesis of branched-chain amino acids. Catalyzes the dehydration of (2R,3R)-2,3-dihydroxy-3-methylpentanoate (2,3-dihydroxy-3-methylvalerate) into 2-oxo-3-methylpentanoate (2-oxo-3-methylvalerate) and of (2R)-2,3-dihydroxy-3-methylbutanoate (2,3-dihydroxyisovalerate) into 2-oxo-3-methylbutanoate (2-oxoisovalerate), the penultimate precursor to L-isoleucine and L-valine, respectively. The protein is Dihydroxy-acid dehydratase of Streptococcus pneumoniae (strain CGSP14).